A 356-amino-acid polypeptide reads, in one-letter code: MILFGSTGSIGVNALKLAALKNIPISALACGDNIALLNEQIARFKPKFVAIKDSKNKHLVKHDRVFIGQEGLEQILTECQDKLLLNAIVGFAGLKSTLKAKELGKNIALANKESLVVAGSFLKGAKFLPVDSEHAALKFLLEGKKNIAKLYITASGGAFYKYKIKDLNQVSLKDALKHPNWNMGAKITIDSATMANKLFEIIEAYHLYDFKEIDALIEPRSLVHAMCEFKNGASTAYFSKADMKLAISDAIFEKQDTPILEAVDFSKMPALKFHPISTKKYPIFKLKNTFLKEPNLGVIINAANEVGVYNFLENKSGFLDIAKCIFKALDHFGVPKISSIEEVFEYDFKTREYLRS.

Positions 7, 8, 9, 10, 31, 33, and 111 each coordinate NADPH. 1-deoxy-D-xylulose 5-phosphate is bound at residue Lys-112. Glu-113 is an NADPH binding site. Asp-131 provides a ligand contact to Mn(2+). 4 residues coordinate 1-deoxy-D-xylulose 5-phosphate: Ser-132, Glu-133, Ser-155, and His-178. A Mn(2+)-binding site is contributed by Glu-133. Gly-184 serves as a coordination point for NADPH. Residues Ser-191, Asn-196, Lys-197, and Glu-200 each contribute to the 1-deoxy-D-xylulose 5-phosphate site. A Mn(2+)-binding site is contributed by Glu-200.

It belongs to the DXR family. The cofactor is Mg(2+). Requires Mn(2+) as cofactor.

It carries out the reaction 2-C-methyl-D-erythritol 4-phosphate + NADP(+) = 1-deoxy-D-xylulose 5-phosphate + NADPH + H(+). It participates in isoprenoid biosynthesis; isopentenyl diphosphate biosynthesis via DXP pathway; isopentenyl diphosphate from 1-deoxy-D-xylulose 5-phosphate: step 1/6. Functionally, catalyzes the NADPH-dependent rearrangement and reduction of 1-deoxy-D-xylulose-5-phosphate (DXP) to 2-C-methyl-D-erythritol 4-phosphate (MEP). In Campylobacter jejuni (strain RM1221), this protein is 1-deoxy-D-xylulose 5-phosphate reductoisomerase.